The sequence spans 146 residues: Hemoglobin subunit beta (146 aa).

The region spanning glutamine 2 to histidine 146 is the Globin domain. Histidine 63 and histidine 92 together coordinate heme b.

The protein belongs to the globin family. As to quaternary structure, heterotetramer of two alpha chains and two beta chains. In terms of tissue distribution, red blood cells.

Involved in oxygen transport from the lung to the various peripheral tissues. The sequence is that of Hemoglobin subunit beta (HBB) from Sturnus vulgaris (Starling).